Here is a 150-residue protein sequence, read N- to C-terminus: C-type lectin mosGCTL-7 (150 aa).

Residues M1 to A17 form the signal peptide. Residues K18–C140 form the C-type lectin domain. A glycan (N-linked (GlcNAc...) asparagine) is linked at N67. Cysteines 111 and 131 form a disulfide.

In terms of assembly, interacts with putative receptor-type tyrosine-protein phosphatase mosPTP-1; the interaction probably mediates the recruitment of Japanese encephalitis virus particles in complex with C-type lectin mosGCTL-7 to the cell surface. As to quaternary structure, (Microbial infection) Interacts with envelope protein E (glycosylated) of Japanese encephalitis virus in a calcium-dependent manner.

The protein resides in the secreted. In terms of biological role, carbohydrate-binding protein. Functionally, (Microbial infection) Facilitates Japanese encephalitis virus infection in mosquitoes probably via capturing viral particles and presenting them to a ligand on the cell surface, thereby facilitating viral entry. The protein is C-type lectin mosGCTL-7 of Aedes aegypti (Yellowfever mosquito).